A 450-amino-acid chain; its full sequence is MEEKLAVSLQEALQEGDTRALREVLEEIHPQDLLALWDELKGEHRYVVLTLLPKAKAAEVLSHLSPEEQAEYLKTLPPWRLREILEELSLDDLADALQAVRKEDPAYFQRLKDLLDPRTRAEVEALARYEEDEAGGLMTPEYVAVREGMTVEEVLRFLRRAAPDAETIYYIYVVDEKGRLKGVLSLRDLIVADPRTRVAEIMNPKVVYVRTDTDQEEVARLMADYDFTVLPVVDEEGRLVGIVTVDDVLDVLEAEATEDIHKLGAVDVPDLVYSEAGPVALWLARVRWLVILILTGMVTSSILQGFESVLEAVTALAFYVPVLLGTGGNTGNQSATLIIRALATRDLDLRDWRRVFLKEMGVGLLLGLTLSFLLVGKVYWDGHPLLLPVVGVSLVLIVFFANLVGAMLPFLLRRLGVDPALVSNPLVATLSDVTGLLIYLSVARLLLEAV.

The Cytoplasmic segment spans residues 1–283 (MEEKLAVSLQ…SEAGPVALWL (283 aa)). Residues Glu-59, Asp-91, Asp-95, and Gly-136 each contribute to the Mg(2+) site. CBS domains lie at 138–200 (MTPE…RVAE) and 202–258 (MNPK…EATE). The ATP site is built by Tyr-170, Ser-185, Arg-187, Asp-188, and Val-207. Glu-216, Ala-223, Asp-226, Asp-247, Asp-250, Glu-255, Glu-258, and Asp-259 together coordinate Mg(2+). Glu-275 lines the Ca(2+) pocket. Positions 275, 304, 307, and 311 each coordinate Mn(2+). A helical transmembrane segment spans residues 284 to 306 (ARVRWLVILILTGMVTSSILQGF). Residues 307 to 315 (ESVLEAVTA) lie on the Periplasmic side of the membrane. A Ca(2+)-binding site is contributed by Glu-311. A helical transmembrane segment spans residues 316–337 (LAFYVPVLLGTGGNTGNQSATL). At 338–351 (IIRALATRDLDLRD) the chain is on the cytoplasmic side. A helical transmembrane segment spans residues 352–381 (WRRVFLKEMGVGLLLGLTLSFLLVGKVYWD). At 382–385 (GHPL) the chain is on the periplasmic side. His-383 lines the Mn(2+) pocket. The helical transmembrane segment at 386-409 (LLPVVGVSLVLIVFFANLVGAMLP) threads the bilayer. Topologically, residues 410–420 (FLLRRLGVDPA) are cytoplasmic. Positions 418, 428, and 432 each coordinate Mg(2+). The helical transmembrane segment at 421–443 (LVSNPLVATLSDVTGLLIYLSVA) threads the bilayer. The Periplasmic segment spans residues 444 to 450 (RLLLEAV).

The protein belongs to the SLC41A transporter family. In terms of assembly, homodimer.

Its subcellular location is the cell inner membrane. The enzyme catalyses Mg(2+)(in) = Mg(2+)(out). The channel activity is regulated via the N-terminal cytoplasmic region, which acts as a Mg(2+) sensor to regulate the gating of the ion-conducting pore in response to the intracellular magnesium concentration. Under high-intracellular magnesium conditions, binding of magnesium to the N-terminal cytoplasmic domain stabilizes the closed conformation of the channel. Under low-intracellular magnesium conditions, the channel is in equilibrium between the open and closed states. A cation-binding site within the membrane (M1) strictly recognizes the size and geometry of the Mg(2+) hydration shells, which may be important for the selective transport of Mg(2+) over other cations. Cation-binding sites on the periplasmic side (M2 and M3) regulate channel opening and prevent conduction of near-cognate cations. Binding of Mn(2+) to the periplasmic sites strongly inhibits the Mg(2+) transport activity. In addition, activity is regulated by ATP, which binds to MgtE and modulates its Mg(2+)-dependent channel gating. ATP binding enhances the intracellular domain affinity for Mg(2+) within physiological concentrations of this divalent cation, enabling MgtE to function as an in vivo Mg(2+) sensor. ATP dissociation from MgtE upregulates Mg(2+) influx at both high and low intracellular Mg(2+) concentrations. In terms of biological role, highly selective magnesium channel that plays an important role in Mg(2+) homeostasis. Functions as a Mg(2+)-dependent gating channel. Exhibits low activity with cobalt, suggesting that it might also be involved in the uptake of Co(2+) as a micronutrient. Also exhibits low activity with Ca(2+), but it shows almost no activity with Mn(2+). The sequence is that of Magnesium transporter MgtE from Thermus thermophilus (strain ATCC 27634 / DSM 579 / HB8).